Consider the following 378-residue polypeptide: Dihydroorotate dehydrogenase (quinone) (378 aa).

FMN contacts are provided by residues 79 to 83 and T103; that span reads PGYDK. K83 provides a ligand contact to substrate. Residue 128–132 coordinates substrate; sequence NRMGF. FMN-binding residues include N160 and N193. Residue N193 coordinates substrate. S196 acts as the Nucleophile in catalysis. N198 provides a ligand contact to substrate. Residues K231 and T259 each coordinate FMN. 260-261 serves as a coordination point for substrate; the sequence is NT. Residues G289, G318, and 339–340 each bind FMN; that span reads YT.

Belongs to the dihydroorotate dehydrogenase family. Type 2 subfamily. Monomer. FMN is required as a cofactor.

The protein localises to the cell membrane. The catalysed reaction is (S)-dihydroorotate + a quinone = orotate + a quinol. The protein operates within pyrimidine metabolism; UMP biosynthesis via de novo pathway; orotate from (S)-dihydroorotate (quinone route): step 1/1. Functionally, catalyzes the conversion of dihydroorotate to orotate with quinone as electron acceptor. The sequence is that of Dihydroorotate dehydrogenase (quinone) from Trichodesmium erythraeum (strain IMS101).